Reading from the N-terminus, the 397-residue chain is Aspartate/prephenate aminotransferase (397 aa).

Positions 38, 124, and 174 each coordinate L-aspartate. Lys-238 is subject to N6-(pyridoxal phosphate)lysine. Arg-375 lines the L-aspartate pocket.

It belongs to the class-I pyridoxal-phosphate-dependent aminotransferase family. Homodimer. Pyridoxal 5'-phosphate serves as cofactor.

The protein resides in the cytoplasm. The enzyme catalyses L-aspartate + 2-oxoglutarate = oxaloacetate + L-glutamate. It carries out the reaction L-arogenate + 2-oxoglutarate = prephenate + L-glutamate. Catalyzes the reversible conversion of aspartate and 2-oxoglutarate to glutamate and oxaloacetate. Can also transaminate prephenate in the presence of glutamate, with lower efficiency. In Nitrosomonas europaea (strain ATCC 19718 / CIP 103999 / KCTC 2705 / NBRC 14298), this protein is Aspartate/prephenate aminotransferase.